Consider the following 756-residue polypeptide: Amine oxidase [copper-containing] 2 (756 aa).

The Cytoplasmic segment spans residues 1–4 (MHLK). Residues 5 to 25 (IVLAFLALSLITIFALAYVLL) traverse the membrane as a helical segment. At 26–756 (TSPGGSSQPP…DLPPFSYHGF (731 aa)) the chain is on the extracellular side. N-linked (GlcNAc...) asparagine glycans are attached at residues Asn133, Asn198, and Asn226. Catalysis depends on Asp380, which acts as the Proton acceptor. Cysteines 398 and 424 form a disulfide. The Schiff-base intermediate with substrate; via topaquinone role is filled by Tyr465. Tyr465 carries the 2',4',5'-topaquinone modification. Residues His516 and His518 each coordinate Cu(2+). Ca(2+)-binding residues include Asp525, Leu526, Asp527, Glu568, Glu637, Phe659, and Asn661. Asn662 carries N-linked (GlcNAc...) asparagine glycosylation. Residues Glu663, Asp669, and Leu670 each coordinate Ca(2+). Cu(2+) is bound at residue His680. A disulfide bridge connects residues Cys730 and Cys737.

It belongs to the copper/topaquinone oxidase family. As to quaternary structure, homodimer; disulfide-linked. Probably forms heterodimers with AOC3. Requires Cu(2+) as cofactor. Ca(2+) serves as cofactor. L-topaquinone is required as a cofactor. Post-translationally, topaquinone (TPQ) is generated by copper-dependent autoxidation of a specific tyrosyl residue. As to expression, expressed in many tissues including adipocytes with higher expression in retina where it is active. Not expressed in testis. In terms of tissue distribution, not expressed in thymus.

It localises to the cell membrane. It is found in the cytoplasm. The enzyme catalyses 2-phenylethylamine + O2 + H2O = 2-phenylacetaldehyde + H2O2 + NH4(+). It catalyses the reaction tryptamine + O2 + H2O = indole-3-acetaldehyde + H2O2 + NH4(+). It carries out the reaction tyramine + O2 + H2O = (4-hydroxyphenyl)acetaldehyde + H2O2 + NH4(+). Its function is as follows. Catalyzes the oxidative deamination of primary amines to the corresponding aldehydes with the concomitant production of hydrogen peroxide and ammonia. Has a preference for 2-phenylethylamine, tryptamine and tyramine. Could also act on methylamine and benzylamine but much less efficiently. The sequence is that of Amine oxidase [copper-containing] 2 from Homo sapiens (Human).